We begin with the raw amino-acid sequence, 476 residues long: ATP synthase subunit beta (476 aa).

ATP is bound at residue 154 to 161 (GGAGVGKT).

The protein belongs to the ATPase alpha/beta chains family. As to quaternary structure, F-type ATPases have 2 components, CF(1) - the catalytic core - and CF(0) - the membrane proton channel. CF(1) has five subunits: alpha(3), beta(3), gamma(1), delta(1), epsilon(1). CF(0) has four main subunits: a(1), b(1), b'(1) and c(9-12).

Its subcellular location is the cell inner membrane. The catalysed reaction is ATP + H2O + 4 H(+)(in) = ADP + phosphate + 5 H(+)(out). Its function is as follows. Produces ATP from ADP in the presence of a proton gradient across the membrane. The catalytic sites are hosted primarily by the beta subunits. The sequence is that of ATP synthase subunit beta from Rhodopseudomonas palustris (strain BisB5).